A 469-amino-acid polypeptide reads, in one-letter code: UDP-N-acetylmuramate--L-alanine ligase (469 aa).

Residue 112–118 (GTHGKTT) coordinates ATP.

It belongs to the MurCDEF family.

The protein localises to the cytoplasm. The catalysed reaction is UDP-N-acetyl-alpha-D-muramate + L-alanine + ATP = UDP-N-acetyl-alpha-D-muramoyl-L-alanine + ADP + phosphate + H(+). It functions in the pathway cell wall biogenesis; peptidoglycan biosynthesis. In terms of biological role, cell wall formation. This is UDP-N-acetylmuramate--L-alanine ligase from Methylibium petroleiphilum (strain ATCC BAA-1232 / LMG 22953 / PM1).